Consider the following 247-residue polypeptide: ATP synthase subunit a, chloroplastic (247 aa).

The next 5 helical transmembrane spans lie at 38–58 (QVLITSWVVIAILLGSVIIAV), 95–115 (VPFIGTMFLFIFVSNWSGALL), 134–154 (INTTVALALPTSVAYFYAGLT), 199–219 (LVVVVLVSLVPSLVPIPVMFL), and 220–240 (GLFTSGIQALIFATLAAAYIG).

Belongs to the ATPase A chain family. As to quaternary structure, F-type ATPases have 2 components, CF(1) - the catalytic core - and CF(0) - the membrane proton channel. CF(1) has five subunits: alpha(3), beta(3), gamma(1), delta(1), epsilon(1). CF(0) has four main subunits: a, b, b' and c.

Its subcellular location is the plastid. The protein localises to the chloroplast thylakoid membrane. In terms of biological role, key component of the proton channel; it plays a direct role in the translocation of protons across the membrane. This Dioscorea elephantipes (Elephant's foot yam) protein is ATP synthase subunit a, chloroplastic.